The primary structure comprises 278 residues: Elongation factor Ts (278 aa).

The tract at residues 79–82 is involved in Mg(2+) ion dislocation from EF-Tu; it reads TDFV.

This sequence belongs to the EF-Ts family.

The protein localises to the cytoplasm. Associates with the EF-Tu.GDP complex and induces the exchange of GDP to GTP. It remains bound to the aminoacyl-tRNA.EF-Tu.GTP complex up to the GTP hydrolysis stage on the ribosome. This Borrelia hermsii (strain HS1 / DAH) protein is Elongation factor Ts.